The following is a 282-amino-acid chain: Putative SWIB domain-containing protein 070L (282 aa).

The span at 1-16 shows a compositional bias: low complexity; the sequence is MFQTTPKQVKPTTVPK. Positions 1-21 are disordered; it reads MFQTTPKQVKPTTVPKTGRKN. The SWIB/MDM2 domain maps to 97–181; sequence GLEKPRMISE…QKYLKHCFDE (85 aa). The tract at residues 199 to 282 is disordered; sequence TDDQTTAEEA…KVKKEHKIKK (84 aa). Positions 262–275 are enriched in basic and acidic residues; it reads GKKDKENIPLEKVK.

Belongs to the IIV-6 306R family.

In Invertebrate iridescent virus 3 (IIV-3), this protein is Putative SWIB domain-containing protein 070L.